Consider the following 70-residue polypeptide: DNA-directed RNA polymerase subunit omega (70 aa).

The protein belongs to the RNA polymerase subunit omega family. As to quaternary structure, the RNAP catalytic core consists of 2 alpha, 1 beta, 1 beta' and 1 omega subunit. When a sigma factor is associated with the core the holoenzyme is formed, which can initiate transcription.

It catalyses the reaction RNA(n) + a ribonucleoside 5'-triphosphate = RNA(n+1) + diphosphate. Its function is as follows. Promotes RNA polymerase assembly. Latches the N- and C-terminal regions of the beta' subunit thereby facilitating its interaction with the beta and alpha subunits. The polypeptide is DNA-directed RNA polymerase subunit omega (Clostridium perfringens (strain ATCC 13124 / DSM 756 / JCM 1290 / NCIMB 6125 / NCTC 8237 / Type A)).